A 258-amino-acid polypeptide reads, in one-letter code: PHD finger protein ALFIN-LIKE 1 (258 aa).

Basic and acidic residues predominate over residues 1–10 (MDASYRRDGR). Disordered stretches follow at residues 1 to 24 (MDASYRRDGRGGGGGGGGGGSAPR) and 150 to 200 (SGSR…DGDH). Residues 11-21 (GGGGGGGGGGS) show a composition bias toward gly residues. Residues 175–187 (HTSDVARVENNIK) are compositionally biased toward basic and acidic residues. Over residues 188-199 (EEDEGYDEDDGD) the composition is skewed to acidic residues. The segment at 202 to 254 (ETLCGTCGGIYSADEFWIGCDVCERWYHGKCVKITPAKAESIKQYKCPSCSSK) adopts a PHD-type zinc-finger fold.

It belongs to the Alfin family. Interacts with H3K4me3 and to a lesser extent with H3K4me2.

The protein localises to the nucleus. Its function is as follows. Histone-binding component that specifically recognizes H3 tails trimethylated on 'Lys-4' (H3K4me3), which mark transcription start sites of virtually all active genes. The polypeptide is PHD finger protein ALFIN-LIKE 1 (Oryza sativa subsp. indica (Rice)).